Consider the following 110-residue polypeptide: uncharacterized protein (110 aa).

This sequence to M.jannaschii MJ0123 and MJ1213.

This is an uncharacterized protein from Aquifex aeolicus (strain VF5).